A 144-amino-acid polypeptide reads, in one-letter code: Large ribosomal subunit protein uL15 (144 aa).

Residues 1–53 (MRLNTLSPAEGSKHASKRPGRGIGSGLGKTGGRGHKGQKSRSGGGVRRGFEGG) are disordered. Residues 21–31 (RGIGSGLGKTG) show a composition bias toward gly residues.

The protein belongs to the universal ribosomal protein uL15 family. In terms of assembly, part of the 50S ribosomal subunit.

In terms of biological role, binds to the 23S rRNA. This Sodalis glossinidius (strain morsitans) protein is Large ribosomal subunit protein uL15.